We begin with the raw amino-acid sequence, 943 residues long: PAX-interacting protein 1 (943 aa).

2 BRCT domains span residues 8–93 (VPEE…GFSP) and 94–182 (ESGQ…LYHP). 3 disordered regions span residues 190-281 (PEEE…RRLQ), 400-507 (AQQQ…QQMR), and 620-641 (QQHLQNQQPLQHQNQQVNPHQT). A compositionally biased stretch (basic and acidic residues) spans 198–214 (ENERSSRSEGSYSDRRS). Over residues 220 to 230 (SSPTSSRDASP) the composition is skewed to low complexity. Over residues 620 to 635 (QQHLQNQQPLQHQNQQ) the composition is skewed to low complexity. BRCT domains lie at 664 to 756 (PEEG…RTLH) and 763 to 851 (PGAK…IQHS). The Nuclear localization signal signature appears at 730 to 747 (GKRCVTAHWLNTVLKKKK).

As to quaternary structure, interacts with smad2 via its last three BRCT domain-containing regions in an activin signal-dependent manner.

It is found in the nucleus. Its function is as follows. Involved in DNA damage response. May function as transcriptional cofactor in TGF beta signaling. Accentuates Smad2-dependent transcription. This is PAX-interacting protein 1 (paxip1) from Danio rerio (Zebrafish).